A 28-amino-acid polypeptide reads, in one-letter code: Short cationic peptide-1b (28 aa).

A Glutamic acid 1-amide modification is found at E28.

Expressed by the venom gland.

The protein resides in the secreted. In Cupiennius salei (American wandering spider), this protein is Short cationic peptide-1b.